The following is a 142-amino-acid chain: Transcriptional regulator MraZ (142 aa).

2 SpoVT-AbrB domains span residues 5–47 and 76–119; these read EYQH…TINE and ACIV…SREK.

The protein belongs to the MraZ family. As to quaternary structure, forms oligomers.

The protein localises to the cytoplasm. It is found in the nucleoid. This Clostridium botulinum (strain Alaska E43 / Type E3) protein is Transcriptional regulator MraZ.